Reading from the N-terminus, the 204-residue chain is Crossover junction endodeoxyribonuclease RuvC (204 aa).

Residues aspartate 7, glutamate 68, and aspartate 141 contribute to the active site. The Mg(2+) site is built by aspartate 7, glutamate 68, and aspartate 141. A disordered region spans residues 164–204 (QAVAAHRTSGASRTPGAAGTPGPSRTPGAPGTSRTLKGRTA).

Belongs to the RuvC family. As to quaternary structure, homodimer which binds Holliday junction (HJ) DNA. The HJ becomes 2-fold symmetrical on binding to RuvC with unstacked arms; it has a different conformation from HJ DNA in complex with RuvA. In the full resolvosome a probable DNA-RuvA(4)-RuvB(12)-RuvC(2) complex forms which resolves the HJ. The cofactor is Mg(2+).

It localises to the cytoplasm. The enzyme catalyses Endonucleolytic cleavage at a junction such as a reciprocal single-stranded crossover between two homologous DNA duplexes (Holliday junction).. The RuvA-RuvB-RuvC complex processes Holliday junction (HJ) DNA during genetic recombination and DNA repair. Endonuclease that resolves HJ intermediates. Cleaves cruciform DNA by making single-stranded nicks across the HJ at symmetrical positions within the homologous arms, yielding a 5'-phosphate and a 3'-hydroxyl group; requires a central core of homology in the junction. The consensus cleavage sequence is 5'-(A/T)TT(C/G)-3'. Cleavage occurs on the 3'-side of the TT dinucleotide at the point of strand exchange. HJ branch migration catalyzed by RuvA-RuvB allows RuvC to scan DNA until it finds its consensus sequence, where it cleaves and resolves the cruciform DNA. This is Crossover junction endodeoxyribonuclease RuvC from Streptomyces griseus subsp. griseus (strain JCM 4626 / CBS 651.72 / NBRC 13350 / KCC S-0626 / ISP 5235).